The chain runs to 718 residues: Quinolinate synthase, chloroplastic (718 aa).

Positions 1 to 22 are enriched in low complexity; it reads MALALSVAPTSSSLSSLLSRTP. The segment at 1–29 is disordered; sequence MALALSVAPTSSSLSSLLSRTPNPSPNFR. The N-terminal 70 residues, 1–70, are a transit peptide targeting the chloroplast; it reads MALALSVAPT…VNASPFSISA (70 aa). The active-site Cysteine persulfide intermediate is the C132. Iminosuccinate-binding residues include H280 and S306. C360 contributes to the [4Fe-4S] cluster binding site. Iminosuccinate contacts are provided by residues 389 to 391 and S411; that span reads YIN. Residue C484 participates in [4Fe-4S] cluster binding. Iminosuccinate is bound by residues 510–512 and T535; that span reads HLE. A [4Fe-4S] cluster-binding site is contributed by C640.

Belongs to the quinolinate synthase family. Type 1 subfamily. In terms of assembly, homodimer. Interacts in vitro with NFS2, CpNIFS3 and AO. Part of a Cys defulfurase complex. [4Fe-4S] cluster is required as a cofactor. Expressed in roots, leaves, stems and flowers.

The protein localises to the plastid. It localises to the chloroplast. The catalysed reaction is iminosuccinate + dihydroxyacetone phosphate = quinolinate + phosphate + 2 H2O + H(+). It functions in the pathway cofactor biosynthesis; NAD(+) biosynthesis; quinolinate from iminoaspartate: step 1/1. Its function is as follows. Catalyzes the condensation of iminoaspartate with dihydroxyacetone phosphate to form quinolinate. Can complement nadA-deficient E.coli mutant. Essential for the de novo synthesis of NAD. Also participates in cysteine desulfurization mediated by NFS2. Can activate the cysteine desulfurase activity of NFS2 in vitro. The polypeptide is Quinolinate synthase, chloroplastic (Arabidopsis thaliana (Mouse-ear cress)).